Consider the following 1435-residue polypeptide: Putative ATP-dependent RNA helicase YLR419W (1435 aa).

Disordered stretches follow at residues 1 to 57 (MAKK…STAS) and 226 to 251 (LSSHGGISSSGKDRQERKVASHKNSH). Serine 9 carries the post-translational modification Phosphoserine. Positions 31 to 43 (KGQEPEPEDDKRA) are enriched in basic and acidic residues. Over residues 45 to 57 (QQSNRAKVTSTAS) the composition is skewed to polar residues. One can recognise a UBA domain in the interval 365 to 406 (PLSTRMIVERLTEIGVSSDEALLALQQNDMNENEAAGFLTRE). The 102-residue stretch at 430–531 (QELESLESIY…EWLKENISKI (102 aa)) folds into the RWD domain. Positions 543-566 (DSKGAINKRNISNGKRSINNSSSR) are disordered. Positions 551-566 (RNISNGKRSINNSSSR) are enriched in polar residues. The 169-residue stretch at 614–782 (IDIINKNEVV…FPGLATCHIE (169 aa)) folds into the Helicase ATP-binding domain. 627 to 634 (GETGSGKS) contacts ATP. The short motif at 729 to 732 (DEVH) is the DEAH box element. Residue serine 816 is modified to Phosphoserine. The Helicase C-terminal domain occupies 845–1020 (LLCQVVEYVH…SLYLSVKAMG (176 aa)).

The protein belongs to the DEAD box helicase family. DEAH subfamily.

The protein resides in the cytoplasm. The catalysed reaction is ATP + H2O = ADP + phosphate + H(+). Its function is as follows. Probable ATP-binding RNA helicase. The protein is Putative ATP-dependent RNA helicase YLR419W of Saccharomyces cerevisiae (strain ATCC 204508 / S288c) (Baker's yeast).